The sequence spans 154 residues: Small ribosomal subunit protein bS6 (154 aa).

The segment at 97–154 (DSEPSAMMQKRDRDDRKDRERGRRRDDEGFGGGGGFGGDRGDRGDRGDRGERSFGGEG) is disordered. 2 stretches are compositionally biased toward basic and acidic residues: residues 105–124 (QKRDRDDRKDRERGRRRDDE) and 135–154 (DRGDRGDRGDRGERSFGGEG).

The protein belongs to the bacterial ribosomal protein bS6 family.

Binds together with bS18 to 16S ribosomal RNA. The chain is Small ribosomal subunit protein bS6 from Methylobacterium radiotolerans (strain ATCC 27329 / DSM 1819 / JCM 2831 / NBRC 15690 / NCIMB 10815 / 0-1).